A 403-amino-acid chain; its full sequence is Phosphoglycerate kinase (403 aa).

Substrate contacts are provided by residues Asp-24–Asn-26, Arg-39, His-62–Arg-65, Arg-121, and Arg-161. Residues Lys-211, Gly-299, Glu-330, and Gly-359–Ser-362 contribute to the ATP site.

It belongs to the phosphoglycerate kinase family. As to quaternary structure, monomer.

It is found in the cytoplasm. It catalyses the reaction (2R)-3-phosphoglycerate + ATP = (2R)-3-phospho-glyceroyl phosphate + ADP. The protein operates within carbohydrate degradation; glycolysis; pyruvate from D-glyceraldehyde 3-phosphate: step 2/5. This chain is Phosphoglycerate kinase, found in Rhodococcus jostii (strain RHA1).